The primary structure comprises 653 residues: Macrolide export ATP-binding/permease protein MacB (653 aa).

The region spanning 6–244 (IELQGVSRSY…PPLLPCSAHP (239 aa)) is the ABC transporter domain. 42–49 (GSSGSGKS) is a binding site for ATP. 4 helical membrane-spanning segments follow: residues 275–295 (LLTMAGIVFGIAAVVTVVGLG), 525–545 (FSVLITMVAMIALFIGSLGVM), 576–596 (FLIEAVLVCLTGGLLGVLLAL), and 616–636 (WPAVSGAFLCACAIGMVFGYW).

It belongs to the ABC transporter superfamily. Macrolide exporter (TC 3.A.1.122) family. Homodimer. Part of the tripartite efflux system MacAB-TolC, which is composed of an inner membrane transporter, MacB, a periplasmic membrane fusion protein, MacA, and an outer membrane component, TolC. The complex forms a large protein conduit and can translocate molecules across both the inner and outer membranes. Interacts with MacA.

It is found in the cell inner membrane. In terms of biological role, part of the tripartite efflux system MacAB-TolC. MacB is a non-canonical ABC transporter that contains transmembrane domains (TMD), which form a pore in the inner membrane, and an ATP-binding domain (NBD), which is responsible for energy generation. Confers resistance against macrolides. The polypeptide is Macrolide export ATP-binding/permease protein MacB (Sodalis glossinidius (strain morsitans)).